The chain runs to 179 residues: Protein LDB18 (179 aa).

May be involved in protein-linked oligosaccharide phosphorylation since the deletion reduces the negative charge of the cell surface. This chain is Protein LDB18 (LDB18), found in Saccharomyces cerevisiae (strain ATCC 204508 / S288c) (Baker's yeast).